The chain runs to 184 residues: Peptidyl-tRNA hydrolase (184 aa).

Residue Tyr-17 coordinates tRNA. Catalysis depends on His-22, which acts as the Proton acceptor. The tRNA site is built by Phe-71, Asn-73, and Asn-119.

The protein belongs to the PTH family. Monomer.

The protein localises to the cytoplasm. It catalyses the reaction an N-acyl-L-alpha-aminoacyl-tRNA + H2O = an N-acyl-L-amino acid + a tRNA + H(+). In terms of biological role, hydrolyzes ribosome-free peptidyl-tRNAs (with 1 or more amino acids incorporated), which drop off the ribosome during protein synthesis, or as a result of ribosome stalling. Catalyzes the release of premature peptidyl moieties from peptidyl-tRNA molecules trapped in stalled 50S ribosomal subunits, and thus maintains levels of free tRNAs and 50S ribosomes. The polypeptide is Peptidyl-tRNA hydrolase (Corynebacterium diphtheriae (strain ATCC 700971 / NCTC 13129 / Biotype gravis)).